The primary structure comprises 212 residues: Uridine kinase (212 aa).

13–20 is an ATP binding site; the sequence is GGSGSGKT.

This sequence belongs to the uridine kinase family.

The protein resides in the cytoplasm. The enzyme catalyses uridine + ATP = UMP + ADP + H(+). The catalysed reaction is cytidine + ATP = CMP + ADP + H(+). The protein operates within pyrimidine metabolism; CTP biosynthesis via salvage pathway; CTP from cytidine: step 1/3. Its pathway is pyrimidine metabolism; UMP biosynthesis via salvage pathway; UMP from uridine: step 1/1. This Bacillus thuringiensis (strain Al Hakam) protein is Uridine kinase.